The primary structure comprises 554 residues: Glucose-6-phosphate isomerase (554 aa).

The residue at position 2 (Ser2) is an N-acetylserine. Position 53 is a phosphothreonine (Thr53). Residues Gly168 to Ser169, Ser218 to Thr223, Gln363, Glu367, His398, and Lys520 contribute to the D-glucose 6-phosphate site. Thr220 bears the Phosphothreonine mark. Catalysis depends on Glu367, which acts as the Proton donor. Residues His398 and Lys520 contribute to the active site.

It belongs to the GPI family. Homodimer.

Its subcellular location is the cytoplasm. The protein resides in the cytosol. It carries out the reaction alpha-D-glucose 6-phosphate = beta-D-fructose 6-phosphate. It functions in the pathway carbohydrate degradation; glycolysis; D-glyceraldehyde 3-phosphate and glycerone phosphate from D-glucose: step 2/4. Its activity is regulated as follows. Strongly inhibited by the polyol (sugar alcohol) phosphate D-glucitol 6-phosphate (D-sorbitol 6-phosphate). Also inhibited by the polyol (sugar alcohol) phosphate D-ribitol 5-phosphate. Its function is as follows. In the cytoplasm, catalyzes the conversion of glucose-6-phosphate to fructose-6-phosphate, the second step in glycolysis, and the reverse reaction during gluconeogenesis. This is Glucose-6-phosphate isomerase (PGI1) from Saccharomyces cerevisiae (strain ATCC 204508 / S288c) (Baker's yeast).